A 293-amino-acid polypeptide reads, in one-letter code: Putative DNA glycosylase At3g47830 (293 aa).

Residues 1-10 (MSKAQKRKRL) show a composition bias toward basic residues. The segment at 1 to 34 (MSKAQKRKRLNKYDGESKTPANKSTVDGGNPYPT) is disordered. DNA-binding residues include Asn108 and Lys151. Lys196 serves as the catalytic Schiff-base intermediate with DNA. The DNA site is built by His216 and Asp232.

The protein belongs to the DNA glycosylase family.

The sequence is that of Putative DNA glycosylase At3g47830 from Arabidopsis thaliana (Mouse-ear cress).